A 338-amino-acid chain; its full sequence is Anthranilate phosphoribosyltransferase (338 aa).

5-phospho-alpha-D-ribose 1-diphosphate is bound by residues G81, 84-85 (GD), S89, 91-94 (NIST), 109-117 (KHGNRSVSS), and S121. Anthranilate is bound at residue G81. S93 contacts Mg(2+). Residue N112 participates in anthranilate binding. R167 lines the anthranilate pocket. Positions 226 and 227 each coordinate Mg(2+).

The protein belongs to the anthranilate phosphoribosyltransferase family. In terms of assembly, homodimer. It depends on Mg(2+) as a cofactor.

The catalysed reaction is N-(5-phospho-beta-D-ribosyl)anthranilate + diphosphate = 5-phospho-alpha-D-ribose 1-diphosphate + anthranilate. It functions in the pathway amino-acid biosynthesis; L-tryptophan biosynthesis; L-tryptophan from chorismate: step 2/5. Functionally, catalyzes the transfer of the phosphoribosyl group of 5-phosphorylribose-1-pyrophosphate (PRPP) to anthranilate to yield N-(5'-phosphoribosyl)-anthranilate (PRA). This chain is Anthranilate phosphoribosyltransferase, found in Thioalkalivibrio sulfidiphilus (strain HL-EbGR7).